Here is an 825-residue protein sequence, read N- to C-terminus: Glycerol-3-phosphate acyltransferase (825 aa).

The HXXXXD motif signature appears at 304-309; it reads CHRSHM. Residues 803–825 are disordered; that stretch reads MPAETSNQPEAPETPEPEGKTES.

This sequence belongs to the GPAT/DAPAT family.

The protein resides in the cell inner membrane. The enzyme catalyses sn-glycerol 3-phosphate + an acyl-CoA = a 1-acyl-sn-glycero-3-phosphate + CoA. The protein operates within phospholipid metabolism; CDP-diacylglycerol biosynthesis; CDP-diacylglycerol from sn-glycerol 3-phosphate: step 1/3. The chain is Glycerol-3-phosphate acyltransferase from Yersinia pseudotuberculosis serotype O:1b (strain IP 31758).